Here is a 321-residue protein sequence, read N- to C-terminus: MGTTKHSKLLILGSGPAGYTAAVYAARANLQPVLITGMEKGGQLTTTTEVENWPGDPNDLTGPLLMERMHEHATKFETEIIFDHINKVDLQNRPFRLNGDNGEYTCDALIIATGASARYLGLPSEEAFKGRGVSACATCDGFFYRNQKVAVIGGGNTAVEEALYLSNIASEVHLIHRRDGFRAEKILIKRLMDKVENGNIILHTNRTLEEVTGDQMGVTGVRLRDTQNSDNIESLDVAGLFVAIGHSPNTAIFEGQLELENGYIKVQSGIHGNATQTSIPGVFAAGDVMDHIYRQAITSAGTGCMAALDAERYLDGLADAK.

36-43 (TGMEKGGQ) is an FAD binding site. The cysteines at positions 136 and 139 are disulfide-linked. 287 to 296 (DVMDHIYRQA) is a binding site for FAD.

Belongs to the class-II pyridine nucleotide-disulfide oxidoreductase family. In terms of assembly, homodimer. FAD serves as cofactor.

The protein resides in the cytoplasm. The enzyme catalyses [thioredoxin]-dithiol + NADP(+) = [thioredoxin]-disulfide + NADPH + H(+). The chain is Thioredoxin reductase (trxB) from Escherichia coli O157:H7.